The following is a 190-amino-acid chain: dCTP deaminase (190 aa).

DCTP-binding positions include 111–116, 135–137, Gln-156, Tyr-172, and Gln-182; these read KSTYAR and TLE. The active-site Proton donor/acceptor is the Glu-137.

This sequence belongs to the dCTP deaminase family. Homotrimer.

The catalysed reaction is dCTP + H2O + H(+) = dUTP + NH4(+). The protein operates within pyrimidine metabolism; dUMP biosynthesis; dUMP from dCTP (dUTP route): step 1/2. Its function is as follows. Catalyzes the deamination of dCTP to dUTP. This Stenotrophomonas maltophilia (strain R551-3) protein is dCTP deaminase.